A 750-amino-acid chain; its full sequence is Cation-transporting P-type ATPase B (750 aa).

Residues 17-80 (RRIQLDVAGM…VIEQAGYRAT (64 aa)) enclose the HMA domain. A metal cation-binding residues include Cys-28 and Cys-31. A run of 6 helical transmembrane segments spans residues 104-124 (LIVA…FAIV), 129-149 (FPGW…WAAW), 167-187 (ETLI…TIFV), 200-220 (AILH…VFVL), 360-380 (IAAV…ASWL), and 389-409 (AFSV…GLAT). The 4-aspartylphosphate intermediate role is filled by Asp-445. The next 6 helical transmembrane spans lie at 471 to 491 (VLAL…TAIV), 500 to 520 (VADF…EHHV), 547 to 567 (SRGE…AVAI), 663 to 683 (VAIG…VPVA), 693 to 713 (TIRI…PIAS), and 715 to 735 (GLLN…FVVS).

It belongs to the cation transport ATPase (P-type) (TC 3.A.3) family. Type IB subfamily.

It localises to the cell membrane. It carries out the reaction ATP + H2O = ADP + phosphate + H(+). The polypeptide is Cation-transporting P-type ATPase B (ctpB) (Mycobacterium leprae (strain TN)).